The primary structure comprises 236 residues: uncharacterized protein (236 aa).

This is an uncharacterized protein from Aquifex aeolicus (strain VF5).